Consider the following 175-residue polypeptide: MAETTVETPVEGTEGEETFAEVTTFESEVPVEGEYTSESLAGRFGDPQPAAGLGRRKNAIARVRIVPGTGKWKINGRTLEDYFPNKVHQQEVNEPFKVLELDGRYDVIARISGGGVSGQAGALRLGVARSLNEADVDNNRATLKKAGFLSRDDRAVERKKAGLKKARKAPQYSKR.

Belongs to the universal ribosomal protein uS9 family.

This Streptomyces griseus subsp. griseus (strain JCM 4626 / CBS 651.72 / NBRC 13350 / KCC S-0626 / ISP 5235) protein is Small ribosomal subunit protein uS9.